The chain runs to 395 residues: Na(+)/H(+) antiporter NhaA (395 aa).

Helical transmembrane passes span 18 to 38 (AGGILLLVFSVGAVIFANSPL), 64 to 84 (LLMWVNDGFMAIFFVLVGLEV), 100 to 120 (IFPAIAACGGMIVPALVYWLV), 129 to 149 (GGWAIPMATDIAFAIGVLVLL), 160 to 180 (FLLALAIIDDLGAIIVIALFF), 182 to 202 (HDLSTKALILASIAIVGLILL), 205 to 225 (FKVSNLIAYVVVGIILWVSVL), 226 to 246 (KSGVHATLAGVIIGFCVPLKG), 266 to 286 (FLILPLFAFCNAGIPLSGLGM), 295 to 315 (LGVTLGLLLGKPIGVFLFSYL), 333 to 353 (IFAVSVLCGIGFTMSMFLASL), and 368 to 388 (LGILFGSSVSAVVGYWLLFVT).

Belongs to the NhaA Na(+)/H(+) (TC 2.A.33) antiporter family.

The protein localises to the cell inner membrane. The enzyme catalyses Na(+)(in) + 2 H(+)(out) = Na(+)(out) + 2 H(+)(in). In terms of biological role, na(+)/H(+) antiporter that extrudes sodium in exchange for external protons. This Histophilus somni (strain 129Pt) (Haemophilus somnus) protein is Na(+)/H(+) antiporter NhaA.